A 122-amino-acid chain; its full sequence is uncharacterized protein (122 aa).

It is found in the mitochondrion. This is an uncharacterized protein from Claviceps purpurea (Ergot fungus).